We begin with the raw amino-acid sequence, 111 residues long: Protein EARLY FLOWERING 4 (111 aa).

Positions Met-1–Trp-26 are disordered. Ser-45 is modified (phosphoserine). Residues Phe-90 to Ala-111 form a disordered region. The segment covering Phe-94–Ala-111 has biased composition (gly residues).

It belongs to the EARLY FLOWERING 4 family. Homodimer. Interacts with ELF3.

It is found in the nucleus. Functionally, component of the central CCA1/LHY-TOC1 feedback loop in the circadian clock that promotes clock accuracy and is required for sustained rhythms in the absence of daily light/dark cycles. Part of a corepressor complex consisting of ELF4, ELF3, and LUX involved in the transcriptional regulation of APRR9. Increases ELF3 nuclear distribution and localization in nuclear bodies. Required for responsiveness to continuous red, by regulating phytochrome B (phyB) signaling (including during seedling de-etiolation) and gene expression. Mediates both entrainment to an environmental cycle and circadian rhythm sustainability under constant conditions. Controls flowering time. Necessary for light-induced expression of both CCA1 and LHY. In Arabidopsis thaliana (Mouse-ear cress), this protein is Protein EARLY FLOWERING 4 (ELF4).